A 265-amino-acid chain; its full sequence is Tryptophan 2,3-dioxygenase (265 aa).

Residues 38-42 (FIVVH) and arginine 104 contribute to the substrate site. Histidine 223 contacts heme. Position 237 (threonine 237) interacts with substrate.

Belongs to the tryptophan 2,3-dioxygenase family. In terms of assembly, homotetramer. Heme is required as a cofactor.

It carries out the reaction L-tryptophan + O2 = N-formyl-L-kynurenine. It functions in the pathway amino-acid degradation; L-tryptophan degradation via kynurenine pathway; L-kynurenine from L-tryptophan: step 1/2. Heme-dependent dioxygenase that catalyzes the oxidative cleavage of the L-tryptophan (L-Trp) pyrrole ring and converts L-tryptophan to N-formyl-L-kynurenine. Catalyzes the oxidative cleavage of the indole moiety. The chain is Tryptophan 2,3-dioxygenase from Anaeromyxobacter dehalogenans (strain 2CP-C).